A 310-amino-acid polypeptide reads, in one-letter code: Carbamate kinase 1 (310 aa).

The protein belongs to the carbamate kinase family.

Its subcellular location is the cytoplasm. The enzyme catalyses hydrogencarbonate + NH4(+) + ATP = carbamoyl phosphate + ADP + H2O + H(+). The protein operates within metabolic intermediate metabolism; carbamoyl phosphate degradation; CO(2) and NH(3) from carbamoyl phosphate: step 1/1. The sequence is that of Carbamate kinase 1 (arcC1) from Staphylococcus aureus (strain MRSA252).